The sequence spans 425 residues: Enolase (425 aa).

Gln-163 serves as a coordination point for (2R)-2-phosphoglycerate. The active-site Proton donor is the Glu-205. The Mg(2+) site is built by Asp-242, Glu-285, and Asp-312. (2R)-2-phosphoglycerate contacts are provided by Lys-337, Arg-366, Ser-367, and Lys-388. The active-site Proton acceptor is Lys-337.

It belongs to the enolase family. Requires Mg(2+) as cofactor.

It localises to the cytoplasm. The protein resides in the secreted. It is found in the cell surface. The enzyme catalyses (2R)-2-phosphoglycerate = phosphoenolpyruvate + H2O. It functions in the pathway carbohydrate degradation; glycolysis; pyruvate from D-glyceraldehyde 3-phosphate: step 4/5. Its function is as follows. Catalyzes the reversible conversion of 2-phosphoglycerate (2-PG) into phosphoenolpyruvate (PEP). It is essential for the degradation of carbohydrates via glycolysis. This Ruegeria pomeroyi (strain ATCC 700808 / DSM 15171 / DSS-3) (Silicibacter pomeroyi) protein is Enolase.